An 86-amino-acid chain; its full sequence is RNA-binding protein Hfq (86 aa).

Residues 9-68 (DPYLNTLRKEKVGVSIYLVNGIKLQGTIESFDQFVILLKNTVSQMVYKHAISTVVPVRPI) enclose the Sm domain.

This sequence belongs to the Hfq family. In terms of assembly, homohexamer.

RNA chaperone that binds small regulatory RNA (sRNAs) and mRNAs to facilitate mRNA translational regulation in response to envelope stress, environmental stress and changes in metabolite concentrations. Also binds with high specificity to tRNAs. The chain is RNA-binding protein Hfq from Pseudomonas fluorescens (strain ATCC BAA-477 / NRRL B-23932 / Pf-5).